We begin with the raw amino-acid sequence, 254 residues long: 5-oxoprolinase subunit A (254 aa).

The protein belongs to the LamB/PxpA family. Forms a complex composed of PxpA, PxpB and PxpC.

The catalysed reaction is 5-oxo-L-proline + ATP + 2 H2O = L-glutamate + ADP + phosphate + H(+). Its function is as follows. Catalyzes the cleavage of 5-oxoproline to form L-glutamate coupled to the hydrolysis of ATP to ADP and inorganic phosphate. The protein is 5-oxoprolinase subunit A of Bacillus mycoides (strain KBAB4) (Bacillus weihenstephanensis).